The following is a 186-amino-acid chain: ADP-ribosylation factor-like protein 8B (186 aa).

Methionine 1 carries the N-acetylmethionine modification. An intramembrane region (note=Mediates targeting to membranes) is located at residues methionine 1–glutamate 19. Residues glutamine 29–threonine 35, aspartate 71–glutamine 75, and asparagine 130–aspartate 133 each bind GTP. Lysine 141 is covalently cross-linked (Glycyl lysine isopeptide (Lys-Gly) (interchain with G-Cter in ubiquitin)).

The protein belongs to the small GTPase superfamily. Arf family. As to quaternary structure, interacts with tubulin. Interacts with BORCS5; recruits ARL8B to lysosomes. Interacts with VPS41; the interaction mediates the recruitment of the HOPS complex to lysosomes. Interacts (GTP-bound form) with PLEKHM2 (via RUN domain); the interaction is required to recruit the motor protein kinesin-1 on lysosomes. Interacts (GTP-bound form) with PLEKHM1 (via RUN domain); the interaction is required for PLEKHM1 localization to lysosomes and for ARL8B function in delivery and degradation of endocytic and autophagic cargo in lysosomes. PLEKHM1 and PLEKHM2 compete for interaction with ARL8B. Interacts (GTP-bound form) with RUFY1; the interaction is required for RUFY1 endosomal location. When GTP-bound, interacts with RUFY3 and RUFY4, but not with RUFY1, nor RUFY2. Post-translationally, ubiquitinated at Lys-141 by RNF167, leading to its degradation. In terms of tissue distribution, ubiquitously expressed.

Its subcellular location is the late endosome membrane. The protein localises to the lysosome membrane. The protein resides in the cytoplasm. It localises to the cytoskeleton. It is found in the spindle. Its subcellular location is the cell projection. The protein localises to the axon. The protein resides in the synapse. It localises to the cytolytic granule membrane. It is found in the early endosome membrane. It carries out the reaction GTP + H2O = GDP + phosphate + H(+). Functionally, small GTPase which cycles between active GTP-bound and inactive GDP-bound states. In its active state, binds to a variety of effector proteins playing a key role in the regulation of lysosomal positioning which is important for nutrient sensing, natural killer cell-mediated cytotoxicity and antigen presentation. Along with its effectors, orchestrates lysosomal transport and fusion. Localizes specifically to lysosomal membranes and mediates anterograde lysosomal motility by recruiting PLEKHM2, which in turn recruits the motor protein kinesin-1 on lysosomes. Required for lysosomal and cytolytic granule exocytosis. Critical factor involved in NK cell-mediated cytotoxicity. Drives the polarization of cytolytic granules and microtubule-organizing centers (MTOCs) toward the immune synapse between effector NK lymphocytes and target cells. In neurons, mediates the anterograde axonal long-range transport of presynaptic lysosome-related vesicles required for presynaptic biogenesis and synaptic function. Also acts as a regulator of endosome to lysosome trafficking pathways of special significance for host defense. Recruits RUFY1 onto early endosomes regulating endosomes to trans-Golgi network proteins retrieval. Regulates cargo trafficking to lysosomes by binding to PLEKHM1 and recruiting the HOPS subunit VPS41, resulting in functional assembly of the HOPS complex on lysosomal membranes. Plays an important role in cargo delivery to lysosomes for antigen presentation and microbial killing. Directs the intersection of CD1d with lipid antigens in lysosomes, and plays a role in intersecting phagosomes with lysosomes to generate phagolysosomes that kill microbes. Involved in the process of MHC II presentation. Regulates the delivery of antigens to lysosomes and the formation of MHC II-peptide complexes through the recruitment of the HOPS complex to lysosomes allowing the fusion of late endosomes to lysosomes. May play a role in chromosome segregation. In terms of biological role, (Microbial infection) During Mycobacterium tuberculosis (Mtb) infection, is required for plasma membrane repair by controlling the exocytosis of lysosomes in macrophages. ARL8B secretion pathway is crucial to control the type of cell death of the M.tuberculosis-infected macrophages, distinguishing avirulent from virulent Mtb induced necrotic cell death. (Microbial infection) During infection, coronaviruses such as SARS-CoV-2 and the chaperone HSPA5/GRP78 are probably co-released through ARL8B-dependent lysosomal exocytic pathway for unconventional egress. The protein is ADP-ribosylation factor-like protein 8B of Homo sapiens (Human).